The sequence spans 294 residues: 4-hydroxy-tetrahydrodipicolinate synthase (294 aa).

A pyruvate-binding site is contributed by threonine 47. The active-site Proton donor/acceptor is tyrosine 135. The active-site Schiff-base intermediate with substrate is the lysine 163. A pyruvate-binding site is contributed by threonine 205.

This sequence belongs to the DapA family. Homotetramer; dimer of dimers.

The protein resides in the cytoplasm. It catalyses the reaction L-aspartate 4-semialdehyde + pyruvate = (2S,4S)-4-hydroxy-2,3,4,5-tetrahydrodipicolinate + H2O + H(+). It participates in amino-acid biosynthesis; L-lysine biosynthesis via DAP pathway; (S)-tetrahydrodipicolinate from L-aspartate: step 3/4. Its function is as follows. Catalyzes the condensation of (S)-aspartate-beta-semialdehyde [(S)-ASA] and pyruvate to 4-hydroxy-tetrahydrodipicolinate (HTPA). This chain is 4-hydroxy-tetrahydrodipicolinate synthase, found in Rickettsia akari (strain Hartford).